Reading from the N-terminus, the 218-residue chain is Small ribosomal subunit protein uS3c (218 aa).

Positions 47-118 (VQKQIKNSSN…KIQITLKNVL (72 aa)) constitute a KH type-2 domain.

Belongs to the universal ribosomal protein uS3 family. Part of the 30S ribosomal subunit.

The protein resides in the plastid. It is found in the chloroplast. The sequence is that of Small ribosomal subunit protein uS3c (rps3) from Angiopteris evecta (Mule's foot fern).